A 293-amino-acid polypeptide reads, in one-letter code: Cytidine deaminase (293 aa).

2 CMP/dCMP-type deaminase domains span residues Asp47–Ala166 and Val186–Val293. Substrate is bound at residue Asn88–Glu90. Residue His101 coordinates Zn(2+). Glu103 functions as the Proton donor in the catalytic mechanism. Positions 128 and 131 each coordinate Zn(2+).

Belongs to the cytidine and deoxycytidylate deaminase family. As to quaternary structure, homodimer. Zn(2+) is required as a cofactor.

It carries out the reaction cytidine + H2O + H(+) = uridine + NH4(+). The enzyme catalyses 2'-deoxycytidine + H2O + H(+) = 2'-deoxyuridine + NH4(+). Its function is as follows. This enzyme scavenges exogenous and endogenous cytidine and 2'-deoxycytidine for UMP synthesis. This Aeromonas hydrophila subsp. hydrophila (strain ATCC 7966 / DSM 30187 / BCRC 13018 / CCUG 14551 / JCM 1027 / KCTC 2358 / NCIMB 9240 / NCTC 8049) protein is Cytidine deaminase.